Here is a 90-residue protein sequence, read N- to C-terminus: Small ribosomal subunit protein bS18 (90 aa).

This sequence belongs to the bacterial ribosomal protein bS18 family. In terms of assembly, part of the 30S ribosomal subunit. Forms a tight heterodimer with protein bS6.

In terms of biological role, binds as a heterodimer with protein bS6 to the central domain of the 16S rRNA, where it helps stabilize the platform of the 30S subunit. This chain is Small ribosomal subunit protein bS18, found in Polynucleobacter asymbioticus (strain DSM 18221 / CIP 109841 / QLW-P1DMWA-1) (Polynucleobacter necessarius subsp. asymbioticus).